A 694-amino-acid chain; its full sequence is DNA ligase (694 aa).

NAD(+) contacts are provided by residues 41–45, 91–92, and Glu121; these read DAEFD and SL. The active-site N6-AMP-lysine intermediate is Lys123. 4 residues coordinate NAD(+): Arg144, Glu184, Lys300, and Lys324. Zn(2+)-binding residues include Cys418, Cys421, Cys437, and Cys443. The region spanning 607-694 is the BRCT domain; that stretch reads SVLPTCEGLT…QGPPVQQVVD (88 aa).

It belongs to the NAD-dependent DNA ligase family. LigA subfamily. Mg(2+) is required as a cofactor. It depends on Mn(2+) as a cofactor.

It catalyses the reaction NAD(+) + (deoxyribonucleotide)n-3'-hydroxyl + 5'-phospho-(deoxyribonucleotide)m = (deoxyribonucleotide)n+m + AMP + beta-nicotinamide D-nucleotide.. DNA ligase that catalyzes the formation of phosphodiester linkages between 5'-phosphoryl and 3'-hydroxyl groups in double-stranded DNA using NAD as a coenzyme and as the energy source for the reaction. It is essential for DNA replication and repair of damaged DNA. The sequence is that of DNA ligase from Mycobacterium leprae (strain TN).